Here is a 417-residue protein sequence, read N- to C-terminus: NADH-quinone oxidoreductase subunit D (417 aa).

The protein belongs to the complex I 49 kDa subunit family. As to quaternary structure, NDH-1 is composed of 14 different subunits. Subunits NuoB, C, D, E, F, and G constitute the peripheral sector of the complex.

The protein localises to the cell inner membrane. It carries out the reaction a quinone + NADH + 5 H(+)(in) = a quinol + NAD(+) + 4 H(+)(out). NDH-1 shuttles electrons from NADH, via FMN and iron-sulfur (Fe-S) centers, to quinones in the respiratory chain. The immediate electron acceptor for the enzyme in this species is believed to be ubiquinone. Couples the redox reaction to proton translocation (for every two electrons transferred, four hydrogen ions are translocated across the cytoplasmic membrane), and thus conserves the redox energy in a proton gradient. This is NADH-quinone oxidoreductase subunit D from Nitrosomonas europaea (strain ATCC 19718 / CIP 103999 / KCTC 2705 / NBRC 14298).